A 390-amino-acid polypeptide reads, in one-letter code: Chorismate synthase (390 aa).

An NADP(+)-binding site is contributed by Arg-48. Residues 126-128 (RAS), Gly-286, 301-305 (KPTSS), and Arg-328 each bind FMN.

Belongs to the chorismate synthase family. The cofactor is FMNH2.

It catalyses the reaction 5-O-(1-carboxyvinyl)-3-phosphoshikimate = chorismate + phosphate. The protein operates within metabolic intermediate biosynthesis; chorismate biosynthesis; chorismate from D-erythrose 4-phosphate and phosphoenolpyruvate: step 7/7. Catalyzes the anti-1,4-elimination of the C-3 phosphate and the C-6 proR hydrogen from 5-enolpyruvylshikimate-3-phosphate (EPSP) to yield chorismate, which is the branch point compound that serves as the starting substrate for the three terminal pathways of aromatic amino acid biosynthesis. This reaction introduces a second double bond into the aromatic ring system. The sequence is that of Chorismate synthase from Sulfurisphaera tokodaii (strain DSM 16993 / JCM 10545 / NBRC 100140 / 7) (Sulfolobus tokodaii).